The following is a 221-amino-acid chain: MNEEKAVVVFSGGQDSTTCLFWAKKQFAEVEAVTFDYGQRHRREIEVAASIADELGVRHTVLDMSLLGQLAPNALTRGEIAIEQKEGELPTTFVDGRNLLFLSFAAVLAKQRGARHIVTGVCETDFSGYPDCRDIFIKSLNVTLNLAMDYPFVIHTPLMWLTKAETWKLADELGALEFVRTKTLTCYNGVIADGCGECPACVLRKRGLEEYLQEKAGVKAR.

10 to 20 provides a ligand contact to ATP; the sequence is FSGGQDSTTCL. Positions 186, 195, 198, and 201 each coordinate Zn(2+).

It belongs to the QueC family. In terms of assembly, homodimer. It depends on Zn(2+) as a cofactor.

The catalysed reaction is 7-carboxy-7-deazaguanine + NH4(+) + ATP = 7-cyano-7-deazaguanine + ADP + phosphate + H2O + H(+). The protein operates within purine metabolism; 7-cyano-7-deazaguanine biosynthesis. Its function is as follows. Catalyzes the ATP-dependent conversion of 7-carboxy-7-deazaguanine (CDG) to 7-cyano-7-deazaguanine (preQ(0)). This chain is 7-cyano-7-deazaguanine synthase, found in Geobacillus thermodenitrificans (strain NG80-2).